The primary structure comprises 133 residues: FPRL1 inhibitory protein (133 aa).

The N-terminal stretch at M1–A28 is a signal peptide.

The protein belongs to the CHIPS/FLIPr family.

It is found in the secreted. Functionally, may be involved in countering the first line of host defense mechanisms. Impairs the leukocyte response to FPRL1 agonists by binding directly to host FPRL1. This Staphylococcus aureus (strain Mu50 / ATCC 700699) protein is FPRL1 inhibitory protein (flr).